The primary structure comprises 194 residues: Pyridoxine/pyridoxamine 5'-phosphate oxidase (194 aa).

FMN-binding positions include 42–47 (RVVLLK), 57–58 (FT), R63, K64, and Q86. Residue K47 participates in substrate binding. Substrate is bound by residues Y104, R108, and S112. FMN-binding positions include 121 to 122 (QS) and W166. Residue 172–174 (RIH) participates in substrate binding. R176 contributes to the FMN binding site.

It belongs to the pyridoxamine 5'-phosphate oxidase family. Homodimer. The cofactor is FMN.

It carries out the reaction pyridoxamine 5'-phosphate + O2 + H2O = pyridoxal 5'-phosphate + H2O2 + NH4(+). It catalyses the reaction pyridoxine 5'-phosphate + O2 = pyridoxal 5'-phosphate + H2O2. The protein operates within cofactor metabolism; pyridoxal 5'-phosphate salvage; pyridoxal 5'-phosphate from pyridoxamine 5'-phosphate: step 1/1. It functions in the pathway cofactor metabolism; pyridoxal 5'-phosphate salvage; pyridoxal 5'-phosphate from pyridoxine 5'-phosphate: step 1/1. Functionally, catalyzes the oxidation of either pyridoxine 5'-phosphate (PNP) or pyridoxamine 5'-phosphate (PMP) into pyridoxal 5'-phosphate (PLP). The protein is Pyridoxine/pyridoxamine 5'-phosphate oxidase of Ehrlichia ruminantium (strain Welgevonden).